Here is a 582-residue protein sequence, read N- to C-terminus: Frizzled-10 (582 aa).

The signal sequence occupies residues 1-21; it reads MQHPGPRLWLVLQVMIGSCTA. Residues 22–226 lie on the Extracellular side of the membrane; the sequence is ISSMDLERPG…DVYWSRDDKR (205 aa). In terms of domain architecture, FZ spans 30-151; it reads PGDGKCQPVE…NDPNYLCMEA (122 aa). 5 cysteine pairs are disulfide-bonded: Cys35-Cys96, Cys43-Cys89, Cys80-Cys118, Cys107-Cys148, and Cys111-Cys135. Asn49 carries an N-linked (GlcNAc...) asparagine glycan. The disordered stretch occupies residues 153–189; it reads NNGSDEPSRGSGMFPPLFRPQRPHSAQEHPLKDGGPG. An N-linked (GlcNAc...) asparagine glycan is attached at Asn154. The chain crosses the membrane as a helical span at residues 227–247; the sequence is FAVVWLAIWSVLCFFSSAFTV. At 248–263 the chain is on the cytoplasmic side; it reads LTFLIDPSRFRYPERP. A helical membrane pass occupies residues 264–284; sequence IIFLSMCYCVYSVGYIIRLFA. Residues 285-312 lie on the Extracellular side of the membrane; it reads GAESIACDRDSGQLYVIQEGLESTGCTL. A helical transmembrane segment spans residues 313–333; the sequence is VFLVLYYFGMASSLWWVVLTL. Over 334-352 the chain is Cytoplasmic; that stretch reads TWFLAAGKKWGHEAIEANS. The chain crosses the membrane as a helical span at residues 353–373; the sequence is SYFHLAAWAIPAVKTILILVM. The Extracellular segment spans residues 374–394; the sequence is RRVAGDELTGVCYVGSMDVNA. Residues 395 to 415 traverse the membrane as a helical segment; the sequence is LTGFVLVPLACYLVIGTSFIL. Residues 416 to 444 lie on the Cytoplasmic side of the membrane; sequence SGFVALFHIRRVMKTGGENTDKLEKLMVR. A helical transmembrane segment spans residues 445-465; the sequence is IGVFSLLYTVPATCVIACYFY. Over 466 to 503 the chain is Extracellular; the sequence is ERLNMDYWKMLATQHKCKMNNQTKTPDCLMTTSIPAVE. N-linked (GlcNAc...) asparagine glycosylation is present at Asn486. The helical transmembrane segment at 504–524 threads the bilayer; that stretch reads VFMVKVSMLLVVGITSGVWVW. At 525 to 582 the chain is on the cytoplasmic side; the sequence is TSKTLQSWQHVCSRGLKRKSRRKPASVVTSAGIYKKAQHPQKPHLGKYELPAQPSACV. A Lys-Thr-X-X-X-Trp motif, mediates interaction with the PDZ domain of Dvl family members motif is present at residues 527–532; that stretch reads KTLQSW. The interval 561-582 is disordered; the sequence is AQHPQKPHLGKYELPAQPSACV. Positions 580-582 match the PDZ-binding motif; sequence ACV.

This sequence belongs to the G-protein coupled receptor Fz/Smo family. As to quaternary structure, interacts with MYOC. Interacts with WNT7B. In terms of processing, ubiquitinated by ZNRF3, leading to its degradation by the proteasome.

Its subcellular location is the cell membrane. In terms of biological role, receptor for Wnt proteins. Functions in the canonical Wnt/beta-catenin signaling pathway. The canonical Wnt/beta-catenin signaling pathway leads to the activation of disheveled proteins, inhibition of GSK-3 kinase, nuclear accumulation of beta-catenin and activation of Wnt target genes. A second signaling pathway involving PKC and calcium fluxes has been seen for some family members, but it is not yet clear if it represents a distinct pathway or if it can be integrated in the canonical pathway, as PKC seems to be required for Wnt-mediated inactivation of GSK-3 kinase. Both pathways seem to involve interactions with G-proteins. May be involved in transduction and intercellular transmission of polarity information during tissue morphogenesis and/or in differentiated tissues. The protein is Frizzled-10 (Fzd10) of Mus musculus (Mouse).